The chain runs to 28 residues: Phospholipase A2 (28 aa).

Gly28 provides a ligand contact to Ca(2+).

It depends on Ca(2+) as a cofactor. As to expression, expressed by the venom gland.

The protein resides in the secreted. It catalyses the reaction a 1,2-diacyl-sn-glycero-3-phosphocholine + H2O = a 1-acyl-sn-glycero-3-phosphocholine + a fatty acid + H(+). PLA2 catalyzes the calcium-dependent hydrolysis of the 2-acyl groups in 3-sn-phosphoglycerides. In Scolopendra dehaani (Thai centipede), this protein is Phospholipase A2.